Reading from the N-terminus, the 158-residue chain is MQGRLSAWLAKHQLAHRPLGFDYQGIEILQIRPQDWPSIAVALYVYGFNYLRSQCAYDVTPGGGLASVYHLTKVQDDADQPEEVCIKIFVSREDPRIPSVFWIWKSSDFQERESYDMFGIIYESHPRLKRILMPESWIGWPLRKDYIVPNFYELQDAY.

Belongs to the complex I 30 kDa subunit family. As to quaternary structure, NDH is composed of at least 16 different subunits, 5 of which are encoded in the nucleus.

It localises to the plastid. It is found in the chloroplast thylakoid membrane. The enzyme catalyses a plastoquinone + NADH + (n+1) H(+)(in) = a plastoquinol + NAD(+) + n H(+)(out). It catalyses the reaction a plastoquinone + NADPH + (n+1) H(+)(in) = a plastoquinol + NADP(+) + n H(+)(out). In terms of biological role, NDH shuttles electrons from NAD(P)H:plastoquinone, via FMN and iron-sulfur (Fe-S) centers, to quinones in the photosynthetic chain and possibly in a chloroplast respiratory chain. The immediate electron acceptor for the enzyme in this species is believed to be plastoquinone. Couples the redox reaction to proton translocation, and thus conserves the redox energy in a proton gradient. The chain is NAD(P)H-quinone oxidoreductase subunit J, chloroplastic from Angiopteris evecta (Mule's foot fern).